Consider the following 139-residue polypeptide: Non-structural protein 1 (139 aa).

The DLNP; interaction with MAP1B signature appears at 136–139 (DLNP).

Belongs to the pneumovirus non-structural protein 1 family. In terms of assembly, monomer. Homomultimer. Heteromultimer with NS2. Interacts with the matrix protein M. Interacts with host ELOC and CUL2; this interaction allows NS1 to form an active E3 ligase with ELOC and CUL2. Interacts with host IRF3; this interaction leads to the disrupted association of IRF3 with CREBBP and thus reduced binding of IRF3 to the IFN-beta promoter. Interacts with host MAVS; this interaction prevents MAVS binding to RIGI and inhibits signaling pathway leading to interferon production. Interacts with host MAP1B/microtubule-associated protein 1B. Interacts with host TRIM25 (via SPRY domain); this interaction suppresses RIGI ubiquitination and results in decreased interaction between RIGI and MAVS.

It is found in the host cytoplasm. The protein localises to the host mitochondrion. It localises to the host nucleus. Its function is as follows. Plays a major role in antagonizing the type I IFN-mediated antiviral response by degrading or inhibiting multiple cellular factors required for either IFN induction or response pathways. Acts cooperatively with NS2 to repress activation and nuclear translocation of host IFN-regulatory factor IRF3. Also disrupts the association of IRF3 with CREBBP. Interacts with host mitochondrial-associated membrane (MAM) MAVS and prevents the interaction with RIGI. Interacts with TRIM25 to suppress TRIM25-mediated RIGI ubiquitination and thereby RIGI-MAVS interaction. Together with NS2, participates in the proteasomal degradation of host STAT2, IRF3, IRF7, TBK1 and RIGI through a NS-degradasome involving CUL2 and Elongin-C. The degradasome requires an intact mitochondrial MAVS. Decreases the levels of host TRAF3 and IKBKE/IKK-epsilon. As functions other than disruptions of the type I IFN-mediated antiviral signaling pathways, induces host SOCS1 and SOCS3 expression. Suppresses premature apoptosis by an NF-kappa-B-dependent, interferon-independent mechanism and thus facilitates virus growth. Additionally, NS1 may serve some inhibitory role in viral transcription and RNA replication. Suppresses proliferation and activation of host CD103+ CD8+ cytotoxic T-lymphocytes and Th17 helper T-lymphocytes. This Homo sapiens (Human) protein is Non-structural protein 1 (1C).